The following is a 951-amino-acid chain: WD repeat-containing and planar cell polarity effector protein fritz (951 aa).

2 WD repeats span residues 304 to 343 and 345 to 384; these read PMGA…TKYA and QIEI…IGHQ. Composition is skewed to polar residues over residues 709–720, 757–771, and 818–828; these read TLKSNSSLQQAP, IPDQ…STMP, and SILSNPANPAP. 3 disordered regions span residues 709-776, 816-883, and 903-951; these read TLKS…SPPP, TASI…AARH, and EYLK…FGVV. Residues 930–942 are compositionally biased toward low complexity; it reads SSKGGNSSSSSSS.

This sequence belongs to the WD repeat fritz family.

The protein resides in the cell membrane. It is found in the cytoplasm. It localises to the cytoskeleton. The protein localises to the cilium axoneme. Its function is as follows. Probable effector of the planar cell polarity signaling pathway which regulates the septin cytoskeleton in both ciliogenesis and collective cell movements. Functions cell autonomously to regulate wing cell hair polarity and number. This Drosophila melanogaster (Fruit fly) protein is WD repeat-containing and planar cell polarity effector protein fritz (frtz).